Here is a 432-residue protein sequence, read N- to C-terminus: MGQAFSITPARRLSGEIAVAGDKSISHRALMLAALAEGESVIEGLLPGDDPRSTAACLRALGAEISGIDGPSVRVRGVGLGRLHEPADVLDMGNSGTTMRLMLGVLAGQPGLFCTLTGDRSLRSRPMLRVVSPLRQMGARIWGREEGGRAPLAVWGEQLRAIDFVSPVASAQVKSAVLLAGLLAEGLTSVSEPVRSRDHSERMLRAFGAEVLVDGTTAAVRGPARLRAQSLRVPGDISSAAFWLVAGSIVPDSQLLLSGVGVNPTRTGVLDALAAMGADIAVENRREVCGEPVADLRVRSAPLKACTIGGEWIPRLVDEIPVLAVAACCAAGKTVIRDAAELRVKESDRLATMARELGRLGAHIEERPDGLVIEGGHRLVGAGVESHDDHRVAMSLAVAGLVATGTTEIADPDCATVSYPQFYEHLARVRQQ.

Residues K23, S24, and R28 each contribute to the 3-phosphoshikimate site. K23 provides a ligand contact to phosphoenolpyruvate. Residues G96 and R125 each contribute to the phosphoenolpyruvate site. 4 residues coordinate 3-phosphoshikimate: S170, Q172, D318, and K345. Q172 is a binding site for phosphoenolpyruvate. The active-site Proton acceptor is D318. Residues R349 and R391 each coordinate phosphoenolpyruvate.

This sequence belongs to the EPSP synthase family. In terms of assembly, monomer.

It localises to the cytoplasm. It catalyses the reaction 3-phosphoshikimate + phosphoenolpyruvate = 5-O-(1-carboxyvinyl)-3-phosphoshikimate + phosphate. Its pathway is metabolic intermediate biosynthesis; chorismate biosynthesis; chorismate from D-erythrose 4-phosphate and phosphoenolpyruvate: step 6/7. Functionally, catalyzes the transfer of the enolpyruvyl moiety of phosphoenolpyruvate (PEP) to the 5-hydroxyl of shikimate-3-phosphate (S3P) to produce enolpyruvyl shikimate-3-phosphate and inorganic phosphate. This is 3-phosphoshikimate 1-carboxyvinyltransferase from Gloeobacter violaceus (strain ATCC 29082 / PCC 7421).